Consider the following 202-residue polypeptide: MDAVGAAGGGAMLPAAARRGQPPQPPCMTTAPEQQAAAGGAVIWPAAAAAEAKEKMVVDARTMQLFPTRSADGVVVSPAPAPAAAQERRRPEVHVTPSVPATAPTAPLTIVYGGQVLVFEHYTAEAAEKLVQRTQHLLAAAAGGGGGNKNNNVTVVTPPPDEPPMLLPPPQMPAASGVSAGGVMPIARKASLQRFLQKRKQK.

The segment covering 1 to 11 (MDAVGAAGGGA) has biased composition (gly residues). The tract at residues 1-31 (MDAVGAAGGGAMLPAAARRGQPPQPPCMTTA) is disordered. The segment covering 12 to 21 (MLPAAARRGQ) has biased composition (low complexity). The region spanning 101–136 (ATAPTAPLTIVYGGQVLVFEHYTAEAAEKLVQRTQH) is the Tify domain. The Jas motif lies at 185-200 (PIARKASLQRFLQKRK). Positions 187–194 (ARKASLQR) match the Nuclear localization signal motif.

Belongs to the TIFY/JAZ family. In terms of processing, ubiquitinated. Targeted for degradation by the SCF(COI1) E3 ubiquitin ligase-proteasome pathway during jasmonate signaling.

It localises to the nucleus. Repressor of jasmonate responses. The sequence is that of Protein TIFY 11g from Oryza sativa subsp. japonica (Rice).